The chain runs to 739 residues: Catalase-peroxidase (739 aa).

The tryptophyl-tyrosyl-methioninium (Trp-Tyr) (with M-253) cross-link spans 99 to 227; the sequence is WHSAGTYRMG…LAAVQMGLIY (129 aa). His100 (proton acceptor) is an active-site residue. A cross-link (tryptophyl-tyrosyl-methioninium (Tyr-Met) (with W-99)) is located at residues 227 to 253; it reads YVNPEGPDGNPDPVASGRDVRETFARM. A heme b-binding site is contributed by His268.

It belongs to the peroxidase family. Peroxidase/catalase subfamily. Homodimer or homotetramer. It depends on heme b as a cofactor. In terms of processing, formation of the three residue Trp-Tyr-Met cross-link is important for the catalase, but not the peroxidase activity of the enzyme.

The catalysed reaction is H2O2 + AH2 = A + 2 H2O. It carries out the reaction 2 H2O2 = O2 + 2 H2O. In terms of biological role, bifunctional enzyme with both catalase and broad-spectrum peroxidase activity. The chain is Catalase-peroxidase from Syntrophotalea carbinolica (strain DSM 2380 / NBRC 103641 / GraBd1) (Pelobacter carbinolicus).